The sequence spans 511 residues: Vicilin-like seed storage protein At2g28490 (511 aa).

The signal sequence occupies residues 1 to 27; it reads MEKNKRAIGFLLLVVLINGVMMTRSNG. The disordered stretch occupies residues 54-81; the sequence is GGGGGGAWGGEGEGGGEWGGGGEGGGGG. Cupin type-1 domains follow at residues 86–238 and 329–480; these read FMMR…PELQ and YNIY…ETMR. N-linked (GlcNAc...) asparagine glycosylation is found at asparagine 231, asparagine 369, asparagine 403, and asparagine 464.

Belongs to the 7S seed storage protein family.

In terms of biological role, seed storage protein. This is Vicilin-like seed storage protein At2g28490 from Arabidopsis thaliana (Mouse-ear cress).